The following is an 84-amino-acid chain: Large ribosomal subunit protein bL27 (84 aa).

Belongs to the bacterial ribosomal protein bL27 family.

This is Large ribosomal subunit protein bL27 from Salinispora tropica (strain ATCC BAA-916 / DSM 44818 / JCM 13857 / NBRC 105044 / CNB-440).